A 151-amino-acid polypeptide reads, in one-letter code: UPF0208 membrane protein YfbV (151 aa).

Transmembrane regions (helical) follow at residues 46-65 (FGIR…QIAL) and 69-91 (LGPA…WWLG).

It belongs to the UPF0208 family.

It localises to the cell inner membrane. This Photorhabdus temperata protein is UPF0208 membrane protein YfbV (yfbV).